The chain runs to 647 residues: Phosphatidylinositol polyphosphate 5-phosphatase type IV (647 aa).

3 disordered regions span residues 1–80 (MPSK…QPPI), 101–131 (RGSQ…PAYS), and 177–196 (HRDA…HASH). Repeat unit 1 spans residues 52 to 55 (PMPP). Residues 52–243 (PMPPFSIPAK…AHSNLGPSRP (192 aa)) form a 3 X 4 AA repeats of P-X-X-P region. Positions 60-75 (AKTSNQNPQTKANLIT) are enriched in polar residues. Repeat 2 spans residues 76–79 (PQPP). A Phosphoserine modification is found at serine 103. The segment covering 120–129 (LQDSVAQSPA) has biased composition (polar residues). Threonine 197 is subject to Phosphothreonine. The stretch at 240–243 (PSRP) is repeat 3. Phosphoserine is present on residues serine 245 and serine 259. Cysteine 644 bears the Cysteine methyl ester mark. Cysteine 644 carries S-farnesyl cysteine lipidation. A propeptide spans 645–647 (TVS) (removed in mature form).

The protein belongs to the inositol polyphosphate 5-phosphatase family. In terms of assembly, interacts (when prenylated) with PDE6D; this is important for normal location in cilia. Highly expressed in testis, in pachytene and diplotene spermatocytes, but not in more mature elongating spermatids. Detected in neurons throughout the brain.

The protein resides in the cytoplasm. Its subcellular location is the cytoskeleton. It is found in the cilium axoneme. The protein localises to the golgi apparatus. It localises to the golgi stack membrane. The protein resides in the cell projection. Its subcellular location is the ruffle. It is found in the cell membrane. The protein localises to the nucleus. It carries out the reaction a 1,2-diacyl-sn-glycero-3-phospho-(1D-myo-inositol-4,5-bisphosphate) + H2O = a 1,2-diacyl-sn-glycero-3-phospho-(1D-myo-inositol 4-phosphate) + phosphate. It catalyses the reaction a 1,2-diacyl-sn-glycero-3-phospho-(1D-myo-inositol-3,4,5-trisphosphate) + H2O = a 1,2-diacyl-sn-glycero-3-phospho-(1D-myo-inositol-3,4-bisphosphate) + phosphate. The catalysed reaction is a 1,2-diacyl-sn-glycero-3-phospho-(1D-myo-inositol-3,5-bisphosphate) + H2O = a 1,2-diacyl-sn-glycero-3-phospho-(1D-myo-inositol-3-phosphate) + phosphate. Its function is as follows. Phosphatidylinositol (PtdIns) phosphatase that specifically hydrolyzes the 5-phosphate of phosphatidylinositol-3,4,5-trisphosphate (PtdIns(3,4,5)P3), phosphatidylinositol 4,5-bisphosphate (PtdIns(4,5)P2) and phosphatidylinositol 3,5-bisphosphate (PtdIns(3,5)P2). Specific for lipid substrates, inactive towards water soluble inositol phosphates. Specific for lipid substrates, inactive towards water soluble inositol phosphates. Plays an essential role in the primary cilium by controlling ciliary growth and phosphoinositide 3-kinase (PI3K) signaling and stability. The sequence is that of Phosphatidylinositol polyphosphate 5-phosphatase type IV (Inpp5e) from Mus musculus (Mouse).